The sequence spans 177 residues: Small ribosomal subunit protein mS23 (177 aa).

Alanine 2 carries the post-translational modification N-acetylalanine. Position 83 is an N6-succinyllysine (lysine 83). An N6-acetyllysine modification is found at lysine 102. The segment at 145–177 is disordered; it reads LQASSEGHEPQEDDDLAQRGQVKQEPETAPSPP.

This sequence belongs to the mitochondrion-specific ribosomal protein mS23 family. Component of the mitochondrial ribosome small subunit (28S) which comprises a 12S rRNA and about 30 distinct proteins.

The protein localises to the mitochondrion. This chain is Small ribosomal subunit protein mS23, found in Mus musculus (Mouse).